Consider the following 299-residue polypeptide: N-acetylmuramic acid 6-phosphate etherase (299 aa).

One can recognise an SIS domain in the interval 54–217 (TIAQYKKGGR…STITMVGVGK (164 aa)). Glutamate 82 serves as the catalytic Proton donor. Glutamate 113 is an active-site residue.

The protein belongs to the GCKR-like family. MurNAc-6-P etherase subfamily. Homodimer.

It catalyses the reaction N-acetyl-D-muramate 6-phosphate + H2O = N-acetyl-D-glucosamine 6-phosphate + (R)-lactate. The protein operates within amino-sugar metabolism; N-acetylmuramate degradation. In terms of biological role, specifically catalyzes the cleavage of the D-lactyl ether substituent of MurNAc 6-phosphate, producing GlcNAc 6-phosphate and D-lactate. The sequence is that of N-acetylmuramic acid 6-phosphate etherase from Staphylococcus aureus (strain USA300).